The primary structure comprises 187 residues: ATP-dependent protease subunit HslV (187 aa).

The active site involves Thr7. Na(+)-binding residues include Ala162, Cys165, and Thr168.

This sequence belongs to the peptidase T1B family. HslV subfamily. A double ring-shaped homohexamer of HslV is capped on each side by a ring-shaped HslU homohexamer. The assembly of the HslU/HslV complex is dependent on binding of ATP.

Its subcellular location is the cytoplasm. It carries out the reaction ATP-dependent cleavage of peptide bonds with broad specificity.. Allosterically activated by HslU binding. Its function is as follows. Protease subunit of a proteasome-like degradation complex believed to be a general protein degrading machinery. In Methylococcus capsulatus (strain ATCC 33009 / NCIMB 11132 / Bath), this protein is ATP-dependent protease subunit HslV.